The sequence spans 628 residues: Phomenoic acid biosynthesis cluster MFS-type transporter (628 aa).

14 helical membrane passes run Ile-102–Ala-122, Val-150–Leu-170, Trp-174–Pro-194, Val-204–Asn-224, Ala-232–Gly-252, Trp-262–Leu-282, Phe-302–Gly-322, Asn-329–Val-349, Met-375–Ile-395, Ala-407–Val-427, Phe-435–Phe-455, Gly-488–Ile-508, Ile-524–Ile-544, and Ala-595–Phe-615.

It belongs to the major facilitator superfamily. TCR/Tet family.

Its subcellular location is the cell membrane. Its function is as follows. MFS-type transporter; part of the gene cluster that mediates the biosynthesis of phomenoic acid, a long chain aliphatic carboxylic acid that does not appear to be essential for pathogenicity but may play a role in allowing to outcompete other fungi in the environmental niche via its antifungal properties. Is probably involved in the efflux of phomenoic acid. The polypeptide is Phomenoic acid biosynthesis cluster MFS-type transporter (Leptosphaeria maculans (strain JN3 / isolate v23.1.3 / race Av1-4-5-6-7-8) (Blackleg fungus)).